The sequence spans 362 residues: RING-H2 finger protein ATL52 (362 aa).

A helical transmembrane segment spans residues 58–78; that stretch reads LIALIGILTSALILVSYYTLI. The segment at 142-184 adopts an RING-type; atypical zinc-finger fold; sequence CSVCLSEFEENESLRLLPKCNHAFHLPCIDTWLKSHSNCPLCR. Disordered stretches follow at residues 252-271 and 296-333; these read DARS…DEDS and EDEE…RSGG. Residues 309 to 319 show a composition bias toward basic and acidic residues; sequence QRREEGEDGDG.

It belongs to the RING-type zinc finger family. ATL subfamily. In terms of tissue distribution, expressed in flowers.

It is found in the membrane. It catalyses the reaction S-ubiquitinyl-[E2 ubiquitin-conjugating enzyme]-L-cysteine + [acceptor protein]-L-lysine = [E2 ubiquitin-conjugating enzyme]-L-cysteine + N(6)-ubiquitinyl-[acceptor protein]-L-lysine.. The protein operates within protein modification; protein ubiquitination. The polypeptide is RING-H2 finger protein ATL52 (ATL52) (Arabidopsis thaliana (Mouse-ear cress)).